Consider the following 388-residue polypeptide: Cell adhesion molecule 4 (388 aa).

The N-terminal stretch at 1–20 is a signal peptide; sequence MGRARRFQWPLLLLWAAAAG. Residues 21–119 form the Ig-like V-type domain; it reads PGTGQEVQTE…DTHHQIATLT (99 aa). Topologically, residues 25–324 are extracellular; the sequence is QEVQTENVTV…VEAQTSVPYA (300 aa). Asparagine 31 and asparagine 67 each carry an N-linked (GlcNAc...) asparagine glycan. Cystine bridges form between cysteine 44-cysteine 104, cysteine 145-cysteine 199, and cysteine 245-cysteine 291. Ig-like C2-type domains lie at 124–219 and 224–307; these read PENP…YVLD and PTAR…YVLV. Asparagine 286 carries N-linked (GlcNAc...) asparagine glycosylation. The chain crosses the membrane as a helical span at residues 325–345; it reads IVGGILALLVFLIICVLVGMV. The Cytoplasmic segment spans residues 346-388; sequence WCSVRQKGSYLTHEASGLDEQGEAREAFLNGGDGHKRKEEFFI. Residue serine 361 is modified to Phosphoserine.

Belongs to the nectin family. Monomer and homodimer. In terms of processing, N-glycosylated. Expressed in the brain and several organs including the kidney and liver.

The protein localises to the membrane. Involved in the cell-cell adhesion. Has calcium- and magnesium-independent cell-cell adhesion activity. May have tumor-suppressor activity. The sequence is that of Cell adhesion molecule 4 (Cadm4) from Mus musculus (Mouse).